The following is an 879-amino-acid chain: Translation initiation factor IF-2 (879 aa).

The disordered stretch occupies residues 48 to 261; that stretch reads EAFPPPPEPA…RPHKSKKQRR (214 aa). The span at 82 to 111 shows a compositional bias: low complexity; that stretch reads PAADAAAPPAVTTPPSAAPAGATTSAPSDA. Composition is skewed to pro residues over residues 119 to 142, 152 to 163, and 173 to 197; these read PPRP…PSGP, SPMPRPMPPRPV, and PGIP…PPRP. A compositionally biased stretch (low complexity) spans 198–213; the sequence is AAGRAAPGRGAPIRLP. A compositionally biased stretch (gly residues) spans 228 to 246; that stretch reads PGVGGRGRGAPGGAFGRGP. Residues 251 to 260 show a composition bias toward basic residues; the sequence is SRPHKSKKQR. Residues 372–543 form the tr-type G domain; it reads PRPPVVTVMG…AILLTADAAL (172 aa). Positions 381 to 388 are G1; it reads GHVDHGKT. Residue 381–388 coordinates GTP; that stretch reads GHVDHGKT. The interval 406-410 is G2; the sequence is GITQH. Positions 431-434 are G3; the sequence is DTPG. GTP contacts are provided by residues 431–435 and 485–488; these read DTPGH and NKID. A G4 region spans residues 485–488; that stretch reads NKID. A G5 region spans residues 521-523; that stretch reads SAL.

Belongs to the TRAFAC class translation factor GTPase superfamily. Classic translation factor GTPase family. IF-2 subfamily.

Its subcellular location is the cytoplasm. One of the essential components for the initiation of protein synthesis. Protects formylmethionyl-tRNA from spontaneous hydrolysis and promotes its binding to the 30S ribosomal subunits. Also involved in the hydrolysis of GTP during the formation of the 70S ribosomal complex. The polypeptide is Translation initiation factor IF-2 (Acidothermus cellulolyticus (strain ATCC 43068 / DSM 8971 / 11B)).